Reading from the N-terminus, the 253-residue chain is MAGQDPRLRGEPLKHVLVIDDDVAMRHLIVEYLTIHAFKVTAVADSKQFNRVLCSETVDVVVVDLNLGREDGLEIVRSLATKSDVPIIIISGARLEEADKVIALELGATDFIAKPFGTREFLARIRVALRVRPSVARTKDRRSFSFADWTLNLRRRRLISEEGSEVKLTAGEFNLLVAFLEKPRDVLSREQLLIASRVREEEVYDRSIDVLILRLRRKLEGDPTTPQLIKTARGAGYFFDADVDVSYGGVMAA.

Residues 15–129 (HVLVIDDDVA…EFLARIRVAL (115 aa)) enclose the Response regulatory domain. At D64 the chain carries 4-aspartylphosphate. Residues 141–241 (RRSFSFADWT…ARGAGYFFDA (101 aa)) constitute a DNA-binding region (ompR/PhoB-type).

Post-translationally, phosphorylated by wide host range (WHR) VirA protein.

The protein resides in the cytoplasm. VirG is required for the positive regulation of at least two vir loci encoded by the Ti plasmid of A.tumefaciens. The protein is Regulatory protein VirG (virG) of Agrobacterium fabrum (strain C58 / ATCC 33970) (Agrobacterium tumefaciens (strain C58)).